The chain runs to 153 residues: SsrA-binding protein (153 aa).

Belongs to the SmpB family.

The protein resides in the cytoplasm. In terms of biological role, required for rescue of stalled ribosomes mediated by trans-translation. Binds to transfer-messenger RNA (tmRNA), required for stable association of tmRNA with ribosomes. tmRNA and SmpB together mimic tRNA shape, replacing the anticodon stem-loop with SmpB. tmRNA is encoded by the ssrA gene; the 2 termini fold to resemble tRNA(Ala) and it encodes a 'tag peptide', a short internal open reading frame. During trans-translation Ala-aminoacylated tmRNA acts like a tRNA, entering the A-site of stalled ribosomes, displacing the stalled mRNA. The ribosome then switches to translate the ORF on the tmRNA; the nascent peptide is terminated with the 'tag peptide' encoded by the tmRNA and targeted for degradation. The ribosome is freed to recommence translation, which seems to be the essential function of trans-translation. This Lactobacillus delbrueckii subsp. bulgaricus (strain ATCC 11842 / DSM 20081 / BCRC 10696 / JCM 1002 / NBRC 13953 / NCIMB 11778 / NCTC 12712 / WDCM 00102 / Lb 14) protein is SsrA-binding protein.